A 367-amino-acid chain; its full sequence is Phosphoribosylformylglycinamidine cyclo-ligase (367 aa).

This sequence belongs to the AIR synthase family.

The protein resides in the cytoplasm. It catalyses the reaction 2-formamido-N(1)-(5-O-phospho-beta-D-ribosyl)acetamidine + ATP = 5-amino-1-(5-phospho-beta-D-ribosyl)imidazole + ADP + phosphate + H(+). It functions in the pathway purine metabolism; IMP biosynthesis via de novo pathway; 5-amino-1-(5-phospho-D-ribosyl)imidazole from N(2)-formyl-N(1)-(5-phospho-D-ribosyl)glycinamide: step 2/2. The sequence is that of Phosphoribosylformylglycinamidine cyclo-ligase from Cyanothece sp. (strain PCC 7425 / ATCC 29141).